The sequence spans 141 residues: Photosystem II protein PSBR, chloroplastic (141 aa).

The N-terminal 27 residues, methionine 1–valine 27, are a transit peptide targeting the chloroplast. Threonine 34 and threonine 37 each carry phosphothreonine. The residue at position 43 (serine 43) is a Phosphoserine. A helical transmembrane segment spans residues glycine 114 to isoleucine 134.

It belongs to the psbR family.

It localises to the plastid. The protein resides in the chloroplast thylakoid membrane. Its function is as follows. Associated with the oxygen-evolving complex of photosystem II (PSII). Is required for the stable binding of LHCSR3 to PSII-LHCII supercomplexes and is essential for efficient energy-dependent quenching and the integrity of the PSII-LHCII-LHCSR3 supercomplex under continuous high light. The protein is Photosystem II protein PSBR, chloroplastic of Chlamydomonas reinhardtii (Chlamydomonas smithii).